A 233-amino-acid chain; its full sequence is Bcl-2-like protein 1 (233 aa).

A BH4 motif is present at residues Ser-4 to Trp-24. The interval Phe-27–Ser-73 is disordered. The residue at position 49 (Ser-49) is a Phosphoserine; by PLK3. A Phosphoserine; by CDK1 modification is found at Ser-62. Residues Val-86–Arg-100 carry the BH3 motif. A BH1 motif is present at residues Glu-129–Gly-148. Positions Pro-180 to Tyr-195 match the BH2 motif. A helical membrane pass occupies residues Phe-210–Leu-226.

This sequence belongs to the Bcl-2 family. Homodimer. Interacts with BCL2L11. Interacts with BAD. Interacts with PGAM5. Interacts with HEBP2. Interacts with p53/TP53 and BBC3; interaction with BBC3 disrupts the interaction with p53/TP53. Interacts with ATP5F1A and ATP5F1B; the interactions mediate the association of isoform Bcl-X(L) with the mitochondrial membrane ATP synthase F(1)F(0) ATP synthase. Interacts with VDAC1. Interacts with BCL2L11 (via BH3). Interacts with RNF183. Interacts with GIMAP3/IAN4 and GIMAP5/IAN5. Interacts with GIMAP5 and HSPA8/HSC70; the interaction between HSPA8 and BCL2L1 is impaired in the absence of GIMAP5. Interacts with isoform 4 of CLU; this interaction releases and activates BAX and promotes cell death. In terms of assembly, forms heterodimers with BAX, BAK or BCL2; heterodimerization with BAX does not seem to be required for anti-apoptotic activity. Interacts with isoform 1 of SIVA1; the interaction inhibits the anti-apoptotic activity. Interacts with IKZF3. Interacts with RTL10/BOP. Interacts with DNM1L and CLTA; DNM1L and BCL2L1 isoform BCL-X(L) may form a complex in synaptic vesicles that also contains clathrin and MFF. Interacts (via the loop between motifs BH4 and BH3) with NLRP1 (via LRR repeats), but not with NLRP2, NLRP3, NLRP4, PYCARD, nor MEFV. Interacts with BECN1. Post-translationally, proteolytically cleaved by caspases during apoptosis. The cleaved protein, lacking the BH4 motif, has pro-apoptotic activity. In terms of processing, phosphorylated on Ser-62 by CDK1. This phosphorylation is partial in normal mitotic cells, but complete in G2-arrested cells upon DNA-damage, thus promoting subsequent apoptosis probably by triggering caspases-mediated proteolysis. Phosphorylated by PLK3, leading to regulate the G2 checkpoint and progression to cytokinesis during mitosis. Phosphorylation at Ser-49 appears during the S phase and G2, disappears rapidly in early mitosis during prometaphase, metaphase and early anaphase, and re-appears during telophase and cytokinesis. Ubiquitinated by RNF183 during prolonged ER stress, leading to degradation by the proteosome. Expressed in most tissues. Bcl-X(beta) is specifically expressed in cerebellum, heart, and thymus. In the ovary, the predominant form is Bcl-X(L), with a small but detectable level of Bcl-X(S).

It localises to the mitochondrion inner membrane. The protein resides in the mitochondrion outer membrane. It is found in the mitochondrion matrix. The protein localises to the cytoplasmic vesicle. Its subcellular location is the secretory vesicle. It localises to the synaptic vesicle membrane. The protein resides in the cytoplasm. It is found in the cytosol. The protein localises to the cytoskeleton. Its subcellular location is the microtubule organizing center. It localises to the centrosome. The protein resides in the nucleus membrane. Potent inhibitor of cell death. Inhibits activation of caspases. Appears to regulate cell death by blocking the voltage-dependent anion channel (VDAC) by binding to it and preventing the release of the caspase activator, CYC1, from the mitochondrial membrane. Also acts as a regulator of G2 checkpoint and progression to cytokinesis during mitosis. Functionally, isoform Bcl-X(L) also regulates presynaptic plasticity, including neurotransmitter release and recovery, number of axonal mitochondria as well as size and number of synaptic vesicle clusters. During synaptic stimulation, increases ATP availability from mitochondria through regulation of mitochondrial membrane ATP synthase F(1)F(0) activity and regulates endocytic vesicle retrieval in hippocampal neurons through association with DMN1L and stimulation of its GTPase activity in synaptic vesicles. May attenuate inflammation impairing NLRP1-inflammasome activation, hence CASP1 activation and IL1B release. Its function is as follows. Isoform Bcl-X(S) promotes apoptosis. This is Bcl-2-like protein 1 (Bcl2l1) from Rattus norvegicus (Rat).